The primary structure comprises 504 residues: Maturase K (504 aa).

The protein belongs to the intron maturase 2 family. MatK subfamily.

The protein resides in the plastid. It is found in the chloroplast. In terms of biological role, usually encoded in the trnK tRNA gene intron. Probably assists in splicing its own and other chloroplast group II introns. The protein is Maturase K of Berzelia lanuginosa (Buttonbush).